The sequence spans 244 residues: Probable 2-phosphosulfolactate phosphatase (244 aa).

This sequence belongs to the ComB family. The cofactor is Mg(2+).

It catalyses the reaction (2R)-O-phospho-3-sulfolactate + H2O = (2R)-3-sulfolactate + phosphate. The chain is Probable 2-phosphosulfolactate phosphatase from Cyanothece sp. (strain PCC 7425 / ATCC 29141).